The following is a 175-amino-acid chain: VQ motif-containing protein 25 (175 aa).

Residues 50–59 (FRELVQSLTG) carry the VQ motif.

It is found in the nucleus. In terms of biological role, may function as negative regulator of plant defense. The polypeptide is VQ motif-containing protein 25 (Arabidopsis thaliana (Mouse-ear cress)).